A 582-amino-acid chain; its full sequence is MASPPPIVEYAVFFTILAVLVFVAGEYLAWVYREQANSDHRPPGYLSWFERLDEIFTPIENGLYRLSGINPRREMTWKGYLKAVLVFNVCIWVLLFVVLMFQDALPMNFVGVGGESWDLAFHTASSFTSNTNQQHYSGETLSVFTHTFGIGIAMFLTPATGLALMPAFARAFTNKEDPRLGNFYENVVRGLVRFLLPISLLIAIILMAEGSVQTILGGQLTANTFTMGIQNIRIGPHAGIEAIKMFGTNGGGINAANAATAFENPTPLSNLVLTLAMPIGTFSAIYAWGAWVGNRSHGVAIVAAFFVIYMALTGVAVVGETGTNAGMVVTGNGLHVDQTVGNMEGKETRFGPTASAIWGLSTTGTTNGGVNSMHNSWTALGAFSLLFAFATNNISNGVGTGLLNILMFVILTAFIGALMIGRRPQYLGKKLEWQEMRYVFVVILVLPILVLIPQAAAVVYQGAIDSMNNPGFRGFSEVLYEFFSASANNGSGFEGLGDGTLFFNLVNGVQVLLARYVPITAQLAIAGYLANKKVSPESKGSLDTDTPAFVGLLIGVIIIVSALVFLPALVFGPIGELLSGGI.

The next 10 helical transmembrane spans lie at 11-31 (AVFF…LAWV), 81-101 (LKAV…VLMF), 148-168 (FGIG…MPAF), 195-215 (LLPI…VQTI), 272-292 (VLTL…GAWV), 298-318 (GVAI…VAVV), 379-399 (ALGA…NGVG), 401-421 (GLLN…LMIG), 439-459 (VFVV…AAVV), and 551-571 (GLLI…ALVF).

It belongs to the KdpA family. In terms of assembly, the system is composed of three essential subunits: KdpA, KdpB and KdpC.

It localises to the cell membrane. Part of the high-affinity ATP-driven potassium transport (or Kdp) system, which catalyzes the hydrolysis of ATP coupled with the electrogenic transport of potassium into the cytoplasm. This subunit binds the extracellular potassium ions and delivers the ions to the membrane domain of KdpB through an intramembrane tunnel. The protein is Potassium-transporting ATPase potassium-binding subunit of Halobacterium salinarum (strain ATCC 700922 / JCM 11081 / NRC-1) (Halobacterium halobium).